A 367-amino-acid polypeptide reads, in one-letter code: snRNA-activating protein complex subunit 1 (367 aa).

The segment at 1–168 is SNAPC3-binding; that stretch reads MGTPPGLQTD…EEFKDPSDRV (168 aa). The interval 164 to 268 is SNAPC4-binding; it reads PSDRVMKLIT…AESLAKIKSK (105 aa). Disordered stretches follow at residues 228-254 and 278-367; these read KDRK…QETE and KSRR…KRKH. Basic and acidic residues predominate over residues 238–254; sequence KINDGEEKMEGNSQETE. Phosphoserine occurs at positions 289 and 290. Over residues 292–301 the composition is skewed to polar residues; that stretch reads CDSASGQGQV.

In terms of assembly, part of the SNAPc complex composed of 5 subunits: SNAPC1, SNAPC2, SNAPC3, SNAPC4 and SNAPC5. SNAPC1 interacts with SNAPC3, SNAPC4 and TBP.

It is found in the nucleus. Part of the SNAPc complex required for the transcription of both RNA polymerase II and III small-nuclear RNA genes. Binds to the proximal sequence element (PSE), a non-TATA-box basal promoter element common to these 2 types of genes. Recruits TBP and BRF2 to the U6 snRNA TATA box. This chain is snRNA-activating protein complex subunit 1 (SNAPC1), found in Macaca fascicularis (Crab-eating macaque).